A 449-amino-acid chain; its full sequence is Trigger factor (449 aa).

The PPIase FKBP-type domain occupies 172–257 (GDEVRFDFKG…IKEITNVKPQ (86 aa)).

The protein belongs to the FKBP-type PPIase family. Tig subfamily.

It localises to the cytoplasm. It catalyses the reaction [protein]-peptidylproline (omega=180) = [protein]-peptidylproline (omega=0). Its function is as follows. Involved in protein export. Acts as a chaperone by maintaining the newly synthesized protein in an open conformation. Functions as a peptidyl-prolyl cis-trans isomerase. The sequence is that of Trigger factor from Ureaplasma parvum serovar 3 (strain ATCC 27815 / 27 / NCTC 11736).